The primary structure comprises 236 residues: 7-cyano-7-deazaguanine synthase (236 aa).

7-17 provides a ligand contact to ATP; it reads CSGGLDSVTLA. Positions 185, 193, 196, and 199 each coordinate Zn(2+).

This sequence belongs to the QueC family. The cofactor is Zn(2+).

It catalyses the reaction 7-carboxy-7-deazaguanine + NH4(+) + ATP = 7-cyano-7-deazaguanine + ADP + phosphate + H2O + H(+). It functions in the pathway purine metabolism; 7-cyano-7-deazaguanine biosynthesis. In terms of biological role, catalyzes the ATP-dependent conversion of 7-carboxy-7-deazaguanine (CDG) to 7-cyano-7-deazaguanine (preQ(0)). The polypeptide is 7-cyano-7-deazaguanine synthase (Rhizobium johnstonii (strain DSM 114642 / LMG 32736 / 3841) (Rhizobium leguminosarum bv. viciae)).